Here is a 438-residue protein sequence, read N- to C-terminus: Ammonium transporter Rh type A (438 aa).

Over 1 to 4 (MRFK) the chain is Cytoplasmic. The helical transmembrane segment at 5–25 (FPLMAISLEVAMIVLFGLFVE) threads the bilayer. The Extracellular portion of the chain corresponds to 26–61 (YETPQNASQKNASHQNASQQGNTSSSAKKDQFFQLY). N31, N36, N41, and N47 each carry an N-linked (GlcNAc...) asparagine glycan. A helical membrane pass occupies residues 62-82 (PLFQDVHVMIFVGFGFLMTFL). At 83–86 (KKYG) the chain is on the cytoplasmic side. The helical transmembrane segment at 87-107 (FSGVGFNLFLAALGLQWGTIM) threads the bilayer. The Extracellular segment spans residues 108–121 (QGLLHSHGKEFHFG). A helical transmembrane segment spans residues 122 to 142 (IYNMINADFSTATVLISFGAV). Residues 143–148 (LGKTSP) are Cytoplasmic-facing. A helical transmembrane segment spans residues 149–169 (IQMLIMTILEIAVFAGNEYLV). The Extracellular portion of the chain corresponds to 170-178 (TELFEASDT). Residues 179-199 (GASMTIHAFGAYFGLAVAGVL) traverse the membrane as a helical segment. Residues 200 to 218 (YRPGLRCEHPNDESVYHSD) are Cytoplasmic-facing. A helical transmembrane segment spans residues 219 to 239 (LFAMIGTLFLWIFWPSFNSAI). Topologically, residues 240–249 (ADPGDHQYRA) are extracellular. A helical membrane pass occupies residues 250–270 (IVNTYMSLAACVITAYALSSL). Residues 271-278 (VERRGRLD) are Cytoplasmic-facing. Residues 279 to 296 (MVHIQNATLAGGVAVGTC) form a helical membrane-spanning segment. The Extracellular portion of the chain corresponds to 297-300 (ADME). The helical transmembrane segment at 301-321 (IPLYAAMTIGSIAGIISVLGY) threads the bilayer. Topologically, residues 322-342 (KFFSPLLANKLMIHDTCGVHN) are cytoplasmic. Residues 343–363 (LHGLPGVFGGLASIVAISWGM) form a helical membrane-spanning segment. Residues 364-372 (STASMAMQA) lie on the Extracellular side of the membrane. The chain crosses the membrane as a helical span at residues 373–393 (AALGSSIGSAIVGGLLTGLIL). Topologically, residues 394-438 (KLPIWNQPPDEYCYDDSVSWKVPKFRELDNRFFQHANHNHVEHEV) are cytoplasmic.

This sequence belongs to the ammonium transporter (TC 2.A.49) family. Rh subfamily. Homodimer. Heterotrimer; a RHCE monomer interacts with a RHAG homodimer. Component of the ankyrin-1 complex in the erythrocyte, composed of ANK1, RHCE, RHAG, SLC4A1, EPB42, GYPA, GYPB and AQP1. Interacts with GYPB (via the N-terminal); this interaction bridges the (RHAG)2(RHCE) heterotrimer with the SLC4A1 Band 3 I dimer complexed with GYPA. Glycosylated.

It is found in the membrane. The catalysed reaction is methylamine(out) = methylamine(in). The enzyme catalyses NH4(+)(in) = NH4(+)(out). It carries out the reaction CO2(out) = CO2(in). Component of the ankyrin-1 complex, a multiprotein complex involved in the stability and shape of the erythrocyte membrane. Heterotrimer with RHCE (RHAG)2(RHCE), that transports ammonium and its related derivative methylammonium, in both neutral and ionic forms, across the erythrocyte membrane. The transport of NH4(+) is electrogenic and masks the NH3 transport. Also, may act as a CO2 channel. Moreover in erythrocyte, regulates RHD membrane expression and is associated with rhesus blood group antigen expression. The sequence is that of Ammonium transporter Rh type A from Mus musculus (Mouse).